Consider the following 1292-residue polypeptide: HMG domain-containing protein 3 (1292 aa).

Positions 42–110 (TKKPRSAYLL…GLDPNSKLSA (69 aa)) form a DNA-binding region, HMG box. 3 disordered regions span residues 363–391 (SKGS…KLTL), 448–505 (VQPE…GRAR), and 562–588 (KQLG…NRTS). Residues 370-391 (RNQQPVTTEQNSSKENASKLTL) are compositionally biased toward polar residues. A compositionally biased stretch (low complexity) spans 467-478 (PTPSEGTSTSSP). The segment covering 562 to 572 (KQLGQPIQQPS) has biased composition (polar residues).

The protein localises to the nucleus. This Homo sapiens (Human) protein is HMG domain-containing protein 3.